The sequence spans 132 residues: UPF0299 membrane protein CKO_00648 (132 aa).

The next 4 helical transmembrane spans lie at 7–27 (IIWQYLRAFVLIYACLYAGIF), 31–51 (LLPITIPGSIIGMLILFVLLA), 63–83 (GCYVLIRYMALLFVPIGVGVM), and 93–113 (FGPVVVSCAISTLVVFLVVSW).

It belongs to the UPF0299 family.

Its subcellular location is the cell inner membrane. This Citrobacter koseri (strain ATCC BAA-895 / CDC 4225-83 / SGSC4696) protein is UPF0299 membrane protein CKO_00648.